Here is a 348-residue protein sequence, read N- to C-terminus: GMP reductase (348 aa).

108 to 131 (ADFQKTKDIMALSDELIFICVDIA) is a binding site for NADP(+). K(+) is bound by residues Gly-181 and Gly-183. The active-site Thioimidate intermediate is the Cys-186. Position 216-239 (216-239 (IIGDGGCSCAGDVSKAFGGGADFV)) interacts with NADP(+).

It belongs to the IMPDH/GMPR family. GuaC type 1 subfamily. In terms of assembly, homotetramer.

The enzyme catalyses IMP + NH4(+) + NADP(+) = GMP + NADPH + 2 H(+). Its function is as follows. Catalyzes the irreversible NADPH-dependent deamination of GMP to IMP. It functions in the conversion of nucleobase, nucleoside and nucleotide derivatives of G to A nucleotides, and in maintaining the intracellular balance of A and G nucleotides. This is GMP reductase from Vibrio parahaemolyticus serotype O3:K6 (strain RIMD 2210633).